The primary structure comprises 196 residues: Xanthine phosphoribosyltransferase (196 aa).

Xanthine-binding residues include Leu-26 and Asn-33. 134–138 (ASGEA) lines the 5-phospho-alpha-D-ribose 1-diphosphate pocket. Residue Lys-162 coordinates xanthine.

Belongs to the purine/pyrimidine phosphoribosyltransferase family. Xpt subfamily. As to quaternary structure, homodimer.

Its subcellular location is the cytoplasm. The enzyme catalyses XMP + diphosphate = xanthine + 5-phospho-alpha-D-ribose 1-diphosphate. It participates in purine metabolism; XMP biosynthesis via salvage pathway; XMP from xanthine: step 1/1. Functionally, converts the preformed base xanthine, a product of nucleic acid breakdown, to xanthosine 5'-monophosphate (XMP), so it can be reused for RNA or DNA synthesis. The chain is Xanthine phosphoribosyltransferase from Moorella thermoacetica (strain ATCC 39073 / JCM 9320).